The following is a 511-amino-acid chain: ATP synthase subunit alpha, plastid (511 aa).

170–177 is a binding site for ATP; the sequence is GDRQTGKT.

It belongs to the ATPase alpha/beta chains family. In terms of assembly, F-type ATPases have 2 components, CF(1) - the catalytic core - and CF(0) - the membrane proton channel. CF(1) has five subunits: alpha(3), beta(3), gamma(1), delta(1), epsilon(1). CF(0) has four main subunits: a, b, b' and c.

It is found in the plastid membrane. The catalysed reaction is ATP + H2O + 4 H(+)(in) = ADP + phosphate + 5 H(+)(out). Produces ATP from ADP in the presence of a proton gradient across the membrane. The alpha chain is a regulatory subunit. In Cuscuta reflexa (Southern Asian dodder), this protein is ATP synthase subunit alpha, plastid.